We begin with the raw amino-acid sequence, 764 residues long: 5-methyltetrahydropteroyltriglutamate--homocysteine methyltransferase (764 aa).

Residues 19–22 (RELK) and lysine 113 contribute to the 5-methyltetrahydropteroyltri-L-glutamate site. L-homocysteine-binding positions include 435–437 (IGS) and glutamate 488. L-methionine is bound by residues 435–437 (IGS) and glutamate 488. Residues 519-520 (RC) and tryptophan 565 each bind 5-methyltetrahydropteroyltri-L-glutamate. Aspartate 603 provides a ligand contact to L-homocysteine. Aspartate 603 serves as a coordination point for L-methionine. Glutamate 609 contributes to the 5-methyltetrahydropteroyltri-L-glutamate binding site. Residues histidine 645, cysteine 647, and glutamate 669 each coordinate Zn(2+). The Proton donor role is filled by histidine 698. Residue cysteine 730 coordinates Zn(2+).

It belongs to the vitamin-B12 independent methionine synthase family. Zn(2+) is required as a cofactor.

It catalyses the reaction 5-methyltetrahydropteroyltri-L-glutamate + L-homocysteine = tetrahydropteroyltri-L-glutamate + L-methionine. The protein operates within amino-acid biosynthesis; L-methionine biosynthesis via de novo pathway; L-methionine from L-homocysteine (MetE route): step 1/1. Functionally, catalyzes the transfer of a methyl group from 5-methyltetrahydrofolate to homocysteine resulting in methionine formation. The sequence is that of 5-methyltetrahydropteroyltriglutamate--homocysteine methyltransferase from Desulforamulus reducens (strain ATCC BAA-1160 / DSM 100696 / MI-1) (Desulfotomaculum reducens).